The sequence spans 493 residues: MSSSANSLNALSFDNSYARLPTHFYQKVAQTPLEDAHLISFNGDVAEALGLNRSQLDPEELARYCGGGGALETGESIAMKYAGHQFGHYNPDLGDGRGLLLGEVVTADNRRLDLHLKGAGRTAYSRFGDGRAVLRSSIREYLVSAAMNSLGVSSTSALCLVGSEEYTMRNGMEPCAMVLRVTPCHIRFGHFEHFYYLGQHDDLKLLADYCIERYFPQLQEADNPYLAMFNEVRNRTADLVAQWQSYGFVHGVMNTDNMSIIGETFDYGPFTFLDSYDPNFISNKNDTAGRYAFKQQPGIALWNLSALAQALLPLIPLDDLKRSLDDFADLYSAAFYGKMSQRLGLTQQGADGSLRQLIDDLLTLFAANNTDMNRFMRALSRYDGNESSLSFMSDLSCDSRGFSEWKARFCKHVDSSDVTLADRTQAMLQVNPEYILRNYMLEEAIREAHQGDYLPVQNLLKIVKNPFNAQPGAERYAEAPPDWAGAICLTCSS.

8 residues coordinate ATP: G94, G96, R97, K117, D129, G130, R180, and R187. D256 serves as the catalytic Proton acceptor. The Mg(2+) site is built by N257 and D266. An ATP-binding site is contributed by D266.

It belongs to the SELO family. The cofactor is Mg(2+). Mn(2+) is required as a cofactor.

The enzyme catalyses L-seryl-[protein] + ATP = 3-O-(5'-adenylyl)-L-seryl-[protein] + diphosphate. The catalysed reaction is L-threonyl-[protein] + ATP = 3-O-(5'-adenylyl)-L-threonyl-[protein] + diphosphate. It carries out the reaction L-tyrosyl-[protein] + ATP = O-(5'-adenylyl)-L-tyrosyl-[protein] + diphosphate. It catalyses the reaction L-histidyl-[protein] + UTP = N(tele)-(5'-uridylyl)-L-histidyl-[protein] + diphosphate. The enzyme catalyses L-seryl-[protein] + UTP = O-(5'-uridylyl)-L-seryl-[protein] + diphosphate. The catalysed reaction is L-tyrosyl-[protein] + UTP = O-(5'-uridylyl)-L-tyrosyl-[protein] + diphosphate. Its function is as follows. Nucleotidyltransferase involved in the post-translational modification of proteins. It can catalyze the addition of adenosine monophosphate (AMP) or uridine monophosphate (UMP) to a protein, resulting in modifications known as AMPylation and UMPylation. This chain is Protein nucleotidyltransferase YdiU, found in Hahella chejuensis (strain KCTC 2396).